The sequence spans 693 residues: Protein-glutamine gamma-glutamyltransferase E (693 aa).

Ala2 is modified (N-acetylalanine). Tyr111 bears the Phosphotyrosine mark. Thr112 bears the Phosphothreonine mark. Ala222, Asn225, Asn227, Asp228, and Asn230 together coordinate Ca(2+). Cys273 is a catalytic residue. Ca(2+)-binding residues include Asp302, Asp304, Asn306, Ser308, and Asp325. Catalysis depends on residues His331 and Asp354. Ca(2+) is bound by residues Asn394, Ser416, Glu444, and Glu449.

The protein belongs to the transglutaminase superfamily. Transglutaminase family. As to quaternary structure, consists of two polypeptide chains, which are synthesized as a precursor form of a single polypeptide. The cofactor is Ca(2+). Post-translationally, activated by proteolytic processing. In vitro activation is commonly achieved by cleavage with dispase, a neutral bacterial protease. Dispase cleavage site was proposed to lie between Ser-470 and Ser-471 or between Pro-465 and Phe-466. Physiological activation may be catalyzed by CTSL and, to a lesser extent, by CTSS, but not by CTSB, CTSD nor CTSV.

The protein localises to the cytoplasm. The catalysed reaction is L-glutaminyl-[protein] + L-lysyl-[protein] = [protein]-L-lysyl-N(6)-5-L-glutamyl-[protein] + NH4(+). In terms of biological role, catalyzes the calcium-dependent formation of isopeptide cross-links between glutamine and lysine residues in various proteins, as well as the conjugation of polyamines to proteins. Involved in the formation of the cornified envelope (CE), a specialized component consisting of covalent cross-links of proteins beneath the plasma membrane of terminally differentiated keratinocytes. Catalyzes small proline-rich proteins (SPRR1 and SPRR2) and LOR cross-linking to form small interchain oligomers, which are further cross-linked by TGM1 onto the growing CE scaffold. In hair follicles, involved in cross-linking structural proteins to hardening the inner root sheath. This chain is Protein-glutamine gamma-glutamyltransferase E (TGM3), found in Homo sapiens (Human).